Here is a 388-residue protein sequence, read N- to C-terminus: Chorismate synthase (388 aa).

2 residues coordinate NADP(+): R40 and R46. FMN-binding positions include R131–S133, N252–A253, G296, K311–T315, and R337.

The protein belongs to the chorismate synthase family. As to quaternary structure, homotetramer. The cofactor is FMNH2.

The catalysed reaction is 5-O-(1-carboxyvinyl)-3-phosphoshikimate = chorismate + phosphate. It functions in the pathway metabolic intermediate biosynthesis; chorismate biosynthesis; chorismate from D-erythrose 4-phosphate and phosphoenolpyruvate: step 7/7. Catalyzes the anti-1,4-elimination of the C-3 phosphate and the C-6 proR hydrogen from 5-enolpyruvylshikimate-3-phosphate (EPSP) to yield chorismate, which is the branch point compound that serves as the starting substrate for the three terminal pathways of aromatic amino acid biosynthesis. This reaction introduces a second double bond into the aromatic ring system. This Limosilactobacillus fermentum (strain NBRC 3956 / LMG 18251) (Lactobacillus fermentum) protein is Chorismate synthase.